We begin with the raw amino-acid sequence, 233 residues long: 7-cyano-7-deazaguanine synthase (233 aa).

7-17 (LSGGLDSAVTS) serves as a coordination point for ATP. The Zn(2+) site is built by Cys-195, Cys-206, Cys-209, and Cys-212.

Belongs to the QueC family. Zn(2+) is required as a cofactor.

It catalyses the reaction 7-carboxy-7-deazaguanine + NH4(+) + ATP = 7-cyano-7-deazaguanine + ADP + phosphate + H2O + H(+). It participates in purine metabolism; 7-cyano-7-deazaguanine biosynthesis. Its function is as follows. Catalyzes the ATP-dependent conversion of 7-carboxy-7-deazaguanine (CDG) to 7-cyano-7-deazaguanine (preQ(0)). The protein is 7-cyano-7-deazaguanine synthase of Methanococcus maripaludis (strain C7 / ATCC BAA-1331).